Consider the following 484-residue polypeptide: Glycogen synthase 2 (484 aa).

ADP-alpha-D-glucose is bound at residue arginine 15.

The protein belongs to the glycosyltransferase 1 family. Bacterial/plant glycogen synthase subfamily.

It catalyses the reaction [(1-&gt;4)-alpha-D-glucosyl](n) + ADP-alpha-D-glucose = [(1-&gt;4)-alpha-D-glucosyl](n+1) + ADP + H(+). It functions in the pathway glycan biosynthesis; glycogen biosynthesis. Synthesizes alpha-1,4-glucan chains using ADP-glucose. This Geobacter sulfurreducens (strain ATCC 51573 / DSM 12127 / PCA) protein is Glycogen synthase 2.